A 3375-amino-acid polypeptide reads, in one-letter code: Basement membrane proteoglycan (3375 aa).

The signal sequence occupies residues 1 to 22 (MKRSSTVLAALLALLLVATNDA). The 86-residue stretch at 45–130 (VQITVFPSEK…NTVEARATLS (86 aa)) folds into the Ig-like C2-type 1 domain. 11 cysteine pairs are disulfide-bonded: Cys66–Cys114, Cys149–Cys161, Cys156–Cys174, Cys168–Cys183, Cys190–Cys202, Cys197–Cys215, Cys209–Cys224, Cys233–Cys246, Cys240–Cys259, Cys253–Cys268, and Cys293–Cys344. LDL-receptor class A domains lie at 148 to 184 (QCMA…ANCP), 189 to 225 (TCEP…LNCN), and 232 to 269 (DCKP…VGCV). The Ig-like C2-type 2 domain maps to 271–355 (PTVVDPPQTN…AINVKGRVLA (85 aa)). The tract at residues 364 to 385 (VDDPRPQPPQPPTAPPQRASCD) is disordered. The span at 369-378 (PQPPQPPTAP) shows a compositional bias: pro residues. Cystine bridges form between Cys384-Cys400, Cys402-Cys411, and Cys414-Cys429. Residues 384–431 (CDTRGAVTPYPNNYGTCECKSQVTGPNCDQCKPGAFHLSEKSPEGCLK) form the Laminin EGF-like 1; truncated domain. A Laminin EGF-like 2; first part domain is found at 432-441 (CFCFGVSNDC). Positions 450 to 633 (KDRLMFAGDA…PDGLALEVEQ (184 aa)) constitute a Laminin IV type A 1 domain. Intrachain disulfides connect Cys634/Cys648, Cys636/Cys689, Cys691/Cys700, and Cys703/Cys718. The Laminin EGF-like 2; second part domain occupies 634–666 (CVCPPGYLGTSCEDCAPGYERSGYGPYLGTCVP). The Laminin EGF-like 3; truncated domain maps to 674 to 720 (CGPGAVAPTAPAQGQCQCKASVIGPNCDRCAPNSFGLAPTNPQGCIP). In terms of domain architecture, Laminin EGF-like 4; first part spans 721 to 730 (CFCSGVTQQC). The Laminin IV type A 2 domain maps to 740–921 (VSIDYARGDR…QGLTAAEVEQ (182 aa)). Positions 922-954 (CICPPGYVGTSCEDCAPGYSRTGGGLYLGLCEK) constitute a Laminin EGF-like 4; second part domain. Intrachain disulfides connect Cys955-Cys964, Cys957-Cys971, Cys974-Cys983, Cys986-Cys1002, Cys1011-Cys1021, Cys1013-Cys1027, Cys1030-Cys1039, Cys1042-Cys1058, Cys1061-Cys1069, Cys1063-Cys1079, Cys1082-Cys1091, Cys1094-Cys1109, Cys1152-Cys1200, Cys1247-Cys1294, and Cys1338-Cys1384. Laminin EGF-like domains follow at residues 955-1004 (CECN…DCQP), 1011-1060 (CHCN…DCTP), and 1061-1111 (CPCP…VCEP). Ig-like C2-type domains are found at residues 1126 to 1222 (PHEV…KRIS), 1226 to 1311 (PQPV…AVLE), 1319 to 1401 (PKVD…EPVQ), 1410 to 1499 (PQRG…ARLN), 1503 to 1585 (PQAI…RPVE), 1588 to 1680 (PARV…TPAT), 1690 to 1785 (PQVE…STLN), 1793 to 1878 (PRPV…VRLE), 1886 to 1970 (PTAV…GNVN), 1973 to 2069 (PSLT…IYIE), 2073 to 2163 (PSRI…AVHV), 2173 to 2260 (PKVE…TAVS), 2263 to 2343 (QQDK…GFVT), 2349 to 2435 (PDTI…RTVL), and 2446 to 2530 (TFTV…VDLQ). Residues 1388–1400 (DPSDNTPLQSEPV) are compositionally biased toward polar residues. 2 disordered regions span residues 1388–1426 (DPSD…QTVN) and 1478–1497 (EYEC…PPAR). A glycan (N-linked (GlcNAc...) asparagine) is linked at Asn1422. Disulfide bonds link Cys1435–Cys1481, Cys1527–Cys1573, Cys1618–Cys1663, and Cys1719–Cys1767. Polar residues predominate over residues 1481 to 1497 (CTSTEPDGSTQLSPPAR). The segment at 1773-1792 (NSPPVKTNPSTLNVTPEGTP) is disordered. The span at 1776–1788 (PVKTNPSTLNVTP) shows a compositional bias: polar residues. Intrachain disulfides connect Cys1814/Cys1861, Cys1907/Cys1954, Cys1998/Cys2053, Cys2099/Cys2147, Cys2195/Cys2242, Cys2284/Cys2329, Cys2374/Cys2420, Cys2467/Cys2514, Cys2713/Cys2725, Cys2719/Cys2736, Cys2738/Cys2747, Cys2754/Cys2764, Cys2759/Cys2773, Cys2775/Cys2784, and Cys2935/Cys2960. The tract at residues 1880–1918 (TEDQEPPTAVVEPRTWNGKPGERHQFRCITTGSPTPKIT) is disordered. The segment covering 1907–1918 (CITTGSPTPKIT) has biased composition (polar residues). Asn2476 carries an N-linked (GlcNAc...) asparagine glycan. The Laminin G-like 1 domain maps to 2532 to 2713 (DDFIPVIDGE…PSSVVKYDAC (182 aa)). One can recognise a Laminin G-like 2 domain in the interval 2793-2960 (PLGFTSDTSF…LSSSGDISSC (168 aa)). N-linked (GlcNAc...) asparagine glycosylation is present at Asn2950. The span at 2952–2963 (SSSGDISSCEES) shows a compositional bias: low complexity. The disordered stretch occupies residues 2952-3124 (SSSGDISSCE…GTLPPDSSSE (173 aa)). Acidic residues-rich tracts occupy residues 2979–2990 (EEPEAVIEEPTT) and 2999–3010 (PITEEPTEEPTT). Residues 3011–3033 (TEEPTTTEEPTTTTEEPTTTTTE) are compositionally biased toward low complexity. Residues 3034–3044 (EPYHIYETSRD) show a composition bias toward basic and acidic residues. Low complexity predominate over residues 3049–3079 (IIIPVETTTTSTTTTSTTEEPEAEPALVLPT). The span at 3081–3094 (PVEENDVSDEEEEI) shows a compositional bias: acidic residues. Disulfide bonds link Cys3141-Cys3152, Cys3146-Cys3162, Cys3164-Cys3173, and Cys3333-Cys3359. 2 N-linked (GlcNAc...) asparagine glycosylation sites follow: Asn3143 and Asn3156. The Laminin G-like 3 domain occupies 3180–3359 (EHAARFDGDA…AIDGKNVKPC (180 aa)).

In terms of assembly, component of an integrin containing attachment complex, composed of at least pat-2, pat-3, pat-4, pat-6, unc-52, unc-97 and unc-112. As to expression, detected on embryonic and adult body wall muscle cells (at protein level). Found in the basement membrane of all contractile tissues (at protein level). Expressed in gonadal sheath cells and spermatheca.

It localises to the secreted. Its subcellular location is the extracellular space. The protein resides in the extracellular matrix. The protein localises to the basement membrane. It is found in the cytoplasm. It localises to the myofibril. Its subcellular location is the sarcomere. The protein resides in the m line. Its function is as follows. Component of an integrin containing attachment complex, which is required for muscle development and maintenance. Probable structural role in myofilament assembly and/or attachment of the myofilament lattice to the cell membrane. May be an extracellular anchor for integrin receptors in body wall muscles and myoepithelial sheath cells. During the formation of neuromuscular junctions at the larval stage, negatively regulates membrane protrusion from body wall muscles, probably downstream of the integrin complex formed by pat-2 and pat-3. Involved in ovulation. Required for normal lifespan. The protein is Basement membrane proteoglycan of Caenorhabditis elegans.